The primary structure comprises 111 residues: Protein YibV (111 aa).

This Escherichia coli O157:H7 protein is Protein YibV (yibV).